A 310-amino-acid polypeptide reads, in one-letter code: Porphobilinogen deaminase (310 aa).

C242 is subject to S-(dipyrrolylmethanemethyl)cysteine.

This sequence belongs to the HMBS family. In terms of assembly, monomer. Dipyrromethane serves as cofactor.

The catalysed reaction is 4 porphobilinogen + H2O = hydroxymethylbilane + 4 NH4(+). It participates in porphyrin-containing compound metabolism; protoporphyrin-IX biosynthesis; coproporphyrinogen-III from 5-aminolevulinate: step 2/4. In terms of biological role, tetrapolymerization of the monopyrrole PBG into the hydroxymethylbilane pre-uroporphyrinogen in several discrete steps. This chain is Porphobilinogen deaminase, found in Shewanella sp. (strain W3-18-1).